The sequence spans 89 residues: Small ribosomal subunit protein uS15 (89 aa).

Belongs to the universal ribosomal protein uS15 family. Part of the 30S ribosomal subunit. Forms a bridge to the 50S subunit in the 70S ribosome, contacting the 23S rRNA.

Functionally, one of the primary rRNA binding proteins, it binds directly to 16S rRNA where it helps nucleate assembly of the platform of the 30S subunit by binding and bridging several RNA helices of the 16S rRNA. In terms of biological role, forms an intersubunit bridge (bridge B4) with the 23S rRNA of the 50S subunit in the ribosome. This chain is Small ribosomal subunit protein uS15, found in Exiguobacterium sibiricum (strain DSM 17290 / CCUG 55495 / CIP 109462 / JCM 13490 / 255-15).